We begin with the raw amino-acid sequence, 687 residues long: Hemin receptor (687 aa).

The first 28 residues, 1–28 (MPRSTSDRFRWSPLSLAIACTLSLAVQA), serve as a signal peptide directing secretion. The TonB box motif lies at 44-51 (DTMVVTAT). The TBDR plug domain occupies 56 to 167 (SSFEAPMMVT…LGGVISYETV (112 aa)). Residues 178 to 687 (NSGYRVYSAA…NAKFFVSYQW (510 aa)) enclose the TBDR beta-barrel domain. Positions 319 to 338 (ARPQGTPEEGRKQTTKGGKL) are disordered. The span at 326–338 (EEGRKQTTKGGKL) shows a compositional bias: basic and acidic residues. The TonB C-terminal box signature appears at 670-687 (QGVPQDGRNAKFFVSYQW).

It belongs to the TonB-dependent receptor family.

The protein localises to the cell outer membrane. In terms of biological role, this protein is involved in the initial step of iron uptake by binding hemin, an iron chelatin siderophore that allows the bacteria to extract iron from the environment. In Yersinia enterocolitica, this protein is Hemin receptor (hemR).